The sequence spans 872 residues: Chaperone protein ClpB 2 (872 aa).

Residues 6-148 enclose the Clp R domain; sequence PNKFTEKAWE…AEIIKQIRGT (143 aa). Repeat stretches follow at residues 9–73 and 85–148; these read FTEK…IAQQ and LGRS…IRGT. An NBD1 region spans residues 161–342; sequence ESLEKYGRDL…RRFQEVLVDE (182 aa). An ATP-binding site is contributed by 208 to 215; sequence GEPGVGKT. Positions 343–551 are linker; that stretch reads PNVLDTISIL…IAEIISKWTG (209 aa). A coiled-coil region spans residues 393 to 527; sequence IDLVDEAAAK…LETQLAEQQT (135 aa). The NBD2 stretch occupies residues 561-772; sequence EKEKLLHLED…RVDETIIFHG (212 aa). 611–618 is a binding site for ATP; sequence GPTGVGKT. Residues 773–872 are C-terminal; sequence LQKSELRSIV…TSLRGDLVIV (100 aa).

Belongs to the ClpA/ClpB family. Homohexamer. The oligomerization is ATP-dependent.

It localises to the cytoplasm. In terms of biological role, part of a stress-induced multi-chaperone system, it is involved in the recovery of the cell from heat-induced damage, in cooperation with DnaK, DnaJ and GrpE. Acts before DnaK, in the processing of protein aggregates. Protein binding stimulates the ATPase activity; ATP hydrolysis unfolds the denatured protein aggregates, which probably helps expose new hydrophobic binding sites on the surface of ClpB-bound aggregates, contributing to the solubilization and refolding of denatured protein aggregates by DnaK. This chain is Chaperone protein ClpB 2 (clpB2), found in Synechocystis sp. (strain ATCC 27184 / PCC 6803 / Kazusa).